We begin with the raw amino-acid sequence, 159 residues long: Phosphopantetheine adenylyltransferase (159 aa).

Position 9 (Thr9) interacts with substrate. ATP-binding positions include 9-10 and His17; that span reads TF. The substrate site is built by Lys41, Leu73, and Arg87. Residues 88–90, Glu98, and 123–129 contribute to the ATP site; these read GLR and YSFISST.

This sequence belongs to the bacterial CoaD family. Homohexamer. Mg(2+) is required as a cofactor.

Its subcellular location is the cytoplasm. The enzyme catalyses (R)-4'-phosphopantetheine + ATP + H(+) = 3'-dephospho-CoA + diphosphate. Its pathway is cofactor biosynthesis; coenzyme A biosynthesis; CoA from (R)-pantothenate: step 4/5. In terms of biological role, reversibly transfers an adenylyl group from ATP to 4'-phosphopantetheine, yielding dephospho-CoA (dPCoA) and pyrophosphate. The sequence is that of Phosphopantetheine adenylyltransferase from Pseudomonas putida (strain ATCC 700007 / DSM 6899 / JCM 31910 / BCRC 17059 / LMG 24140 / F1).